The sequence spans 189 residues: Cytochrome b6-f complex subunit 4 (189 aa).

Transmembrane regions (helical) follow at residues 36–56 (LSYIFPVVILGTIACTIGLAV), 103–123 (LLGVLLMASVPAGSLTVPFLE), and 139–159 (TVSLIGTAVALWLGIGAALPI).

It belongs to the cytochrome b family. PetD subfamily. As to quaternary structure, the 4 large subunits of the cytochrome b6-f complex are cytochrome b6, subunit IV (17 kDa polypeptide, petD), cytochrome f and the Rieske protein, while the 4 small subunits are petG, petL, petM and petN. The complex functions as a dimer.

The protein resides in the plastid. It is found in the chloroplast thylakoid membrane. Its function is as follows. Component of the cytochrome b6-f complex, which mediates electron transfer between photosystem II (PSII) and photosystem I (PSI), cyclic electron flow around PSI, and state transitions. The sequence is that of Cytochrome b6-f complex subunit 4 from Pinus koraiensis (Korean pine).